Consider the following 307-residue polypeptide: tRNA dimethylallyltransferase (307 aa).

6–13 (GATATGKT) contacts ATP. 8-13 (TATGKT) serves as a coordination point for substrate. The tract at residues 31-34 (DSMM) is interaction with substrate tRNA.

It belongs to the IPP transferase family. In terms of assembly, monomer. The cofactor is Mg(2+).

The enzyme catalyses adenosine(37) in tRNA + dimethylallyl diphosphate = N(6)-dimethylallyladenosine(37) in tRNA + diphosphate. Its function is as follows. Catalyzes the transfer of a dimethylallyl group onto the adenine at position 37 in tRNAs that read codons beginning with uridine, leading to the formation of N6-(dimethylallyl)adenosine (i(6)A). In Sulfurihydrogenibium sp. (strain YO3AOP1), this protein is tRNA dimethylallyltransferase.